Consider the following 451-residue polypeptide: Tubulin gamma-2 chain (451 aa).

Serine 131 carries the post-translational modification Phosphoserine; by BRSK1. 142–148 contributes to the GTP binding site; sequence AGGTGSG.

This sequence belongs to the tubulin family. Component of the gamma-tubulin ring complex (gTuRC) consisting of TUBGCP2, TUBGCP3, TUBGCP4, TUBGCP5 and TUBGCP6 and gamma-tubulin TUBG1 or TUBG2. TUBGCP2, TUBGCP3, TUBGCP4, TUBGCP5 and TUBGCP6 assemble in a 5:5:2:1:1 stoichiometry; each is associated with a gamma-tubulin, thereby arranging 14 gamma-tubulins in a helical manner. Gamma-tubulin at the first position is blocked by TUBGCP3 at the last position, allowing 13 protafilaments to grow into a microtubule. Interacts with alpha-beta tubulin heterodimers; the interaction allows microtubules to nucleate from the gTuRC. Phosphorylation at Ser-131 by BRSK1 regulates centrosome duplication, possibly by mediating relocation of gamma-tubulin and its associated proteins from the cytoplasm to the centrosome.

The protein localises to the cytoplasm. It localises to the cytoskeleton. Its subcellular location is the microtubule organizing center. The protein resides in the centrosome. Its function is as follows. Tubulin is the major constituent of microtubules, protein filaments consisting of alpha- and beta-tubulin heterodimers. Gamma-tubulin is a key component of the gamma-tubulin ring complex (gTuRC) which mediates microtubule nucleation. The gTuRC regulates the minus-end nucleation of alpha-beta tubulin heterodimers that grow into microtubule protafilaments, a critical step in centrosome duplication and spindle formation. This chain is Tubulin gamma-2 chain (TUBG2), found in Bos taurus (Bovine).